Here is a 466-residue protein sequence, read N- to C-terminus: Cysteine--tRNA ligase (466 aa).

Zn(2+) is bound at residue Cys-29. Residues 31-41 carry the 'HIGH' region motif; that stretch reads ATVQAAPHIGH. Residues Cys-208, His-233, and Glu-237 each contribute to the Zn(2+) site. A 'KMSKS' region motif is present at residues 264–268; the sequence is KMSKS. ATP is bound at residue Lys-267.

This sequence belongs to the class-I aminoacyl-tRNA synthetase family. In terms of assembly, monomer. Requires Zn(2+) as cofactor.

It localises to the cytoplasm. The catalysed reaction is tRNA(Cys) + L-cysteine + ATP = L-cysteinyl-tRNA(Cys) + AMP + diphosphate. In Streptomyces avermitilis (strain ATCC 31267 / DSM 46492 / JCM 5070 / NBRC 14893 / NCIMB 12804 / NRRL 8165 / MA-4680), this protein is Cysteine--tRNA ligase.